The following is a 270-amino-acid chain: tRNA pseudouridine synthase A (270 aa).

Residue Asp-55 is the Nucleophile of the active site. Tyr-110 serves as a coordination point for substrate.

Belongs to the tRNA pseudouridine synthase TruA family.

The catalysed reaction is uridine(38/39/40) in tRNA = pseudouridine(38/39/40) in tRNA. In terms of biological role, formation of pseudouridine at positions 38, 39 and 40 in the anticodon stem and loop of transfer RNAs. The polypeptide is tRNA pseudouridine synthase A (Methanoculleus marisnigri (strain ATCC 35101 / DSM 1498 / JR1)).